Reading from the N-terminus, the 84-residue chain is Small ribosomal subunit protein bS20 (84 aa).

Belongs to the bacterial ribosomal protein bS20 family.

Its function is as follows. Binds directly to 16S ribosomal RNA. This Azobacteroides pseudotrichonymphae genomovar. CFP2 protein is Small ribosomal subunit protein bS20.